The following is a 499-amino-acid chain: Endoglucanase (499 aa).

A signal peptide spans 1-29 (MKRSISIFITCLLITLLTMGGMLASPASA). Residues histidine 65, 69-70 (WY), tyrosine 96, and histidine 131 each bind substrate. Catalysis depends on glutamate 169, which acts as the Proton donor. Tyrosine 231 contributes to the substrate binding site. Glutamate 257 (nucleophile) is an active-site residue. Substrate contacts are provided by residues 263–264 (AS), tryptophan 291, and 296–298 (KQE). The region spanning 350 to 499 (QENGISVQYR…GKLIWGTEPN (150 aa)) is the CBM3 domain.

Belongs to the glycosyl hydrolase 5 (cellulase A) family.

The catalysed reaction is Endohydrolysis of (1-&gt;4)-beta-D-glucosidic linkages in cellulose, lichenin and cereal beta-D-glucans.. This is Endoglucanase (bglC) from Bacillus subtilis.